The primary structure comprises 158 residues: MLP-like protein 43 (158 aa).

Residue Ala-2 is modified to N-acetylalanine.

It belongs to the MLP family.

In Arabidopsis thaliana (Mouse-ear cress), this protein is MLP-like protein 43 (MLP43).